The chain runs to 412 residues: L-cysteine:1D-myo-inositol 2-amino-2-deoxy-alpha-D-glucopyranoside ligase (412 aa).

Cys-43 lines the Zn(2+) pocket. L-cysteinyl-5'-AMP contacts are provided by residues 43 to 46 (CGIT), Thr-58, and 81 to 83 (NVT). Positions 45 to 55 (ITPYDATHLGH) match the 'HIGH' region motif. A 'ERGGDP' region motif is present at residues 186-191 (ERGGDP). Trp-227 contacts L-cysteinyl-5'-AMP. Cys-231 provides a ligand contact to Zn(2+). L-cysteinyl-5'-AMP is bound at residue 249–251 (GND). His-256 lines the Zn(2+) pocket. Ile-283 is a binding site for L-cysteinyl-5'-AMP. The 'KMSKS' region motif lies at 289 to 293 (KMSKS).

The protein belongs to the class-I aminoacyl-tRNA synthetase family. MshC subfamily. In terms of assembly, monomer. The cofactor is Zn(2+).

It catalyses the reaction 1D-myo-inositol 2-amino-2-deoxy-alpha-D-glucopyranoside + L-cysteine + ATP = 1D-myo-inositol 2-(L-cysteinylamino)-2-deoxy-alpha-D-glucopyranoside + AMP + diphosphate + H(+). Its function is as follows. Catalyzes the ATP-dependent condensation of GlcN-Ins and L-cysteine to form L-Cys-GlcN-Ins. The sequence is that of L-cysteine:1D-myo-inositol 2-amino-2-deoxy-alpha-D-glucopyranoside ligase from Salinispora arenicola (strain CNS-205).